Reading from the N-terminus, the 494-residue chain is Cytochrome P450 monooxygenase ccsD (494 aa).

The chain crosses the membrane as a helical span at residues 5–25 (ISPRTLVLLAVTCSLLVLYFS). Position 438 (Cys438) interacts with heme. Residues Asn445 and Asn477 are each glycosylated (N-linked (GlcNAc...) asparagine).

Belongs to the cytochrome P450 family. The cofactor is heme.

The protein resides in the membrane. It functions in the pathway mycotoxin biosynthesis. In terms of biological role, cytochrome P450 monooxygenase; part of the gene cluster that mediates the biosynthesis of a family of the mycotoxins cytochalasins E and K. The hybrid PKS-NRPS synthetase ccsA and the enoyl reductase ccsC are responsible for fusion of phenylalanine with an octaketide backbone and subsequent release of the stable tetramic acid precursor. The polyketide synthase module (PKS) of the PKS-NRPS ccsA is responsible for the synthesis of the octaketide backbone. The downstream nonribosomal peptide synthetase (NRPS) amidates the carboxyl end of the octaketide with a phenylalanine. A reductase-like domain (R) at the C-terminus catalyzes the reductive release of the polyketide-amino acid intermediate. Because ccsA lacks a designated enoylreductase (ER) domain, the required activity is provided the enoyl reductase ccsC. Upon formation of the 11-membered carbocycle-fused perhydroisoindolone intermediate, a number of oxidative steps are required to afford the final cytochalasin E and K, including two hydroxylations at C17 and C18, one alcohol oxidation at C17, one epoxidation at C6 and C7 and two Baeyer-Villiger oxidations. The oxidative modification at C17, C18 and the C6-C7 epoxidation are likely to be catalyzed by the two cytochrome P450 oxygenases ccsD and ccsG. CcsD may be responsible for the epoxidation of the C6-C7 double bond. CcsG may be responsible for the successive oxidative modifications at C17 and C18. The double Baeyer-Villiger oxidations of ketocytochalasin to precytochalasin and cytochalasin Z(16) are among the final steps leading to cytochalasin E and K and are catalyzed by ccsB. The first oxygen insertion step follows that of the classic BVMO mechanism, generating the ester precytochalasin. Release of precytochalasin into an aqueous environment can generate the shunt product iso-precytochalasin through spontaneous isomerization. Alternatively, precytochalasin can undergo further oxidation by ccsB to yield the in-line carbonate-containing cytochalasin Z(16). Cytochalasin Z(16) is a precursor to cytochalasin E and cytochalasin K, whereas iso-precytochalasin is a precursor to cytochalasin Z(17) and rosellichalasin. The hydrolyase ccsE may catalyze hydrolysis of epoxide bond in cytochalasin E to afford cytochalasin K. The function of ccsF has not been assigned but it may play a role in post-PKS-NRPS biosynthetic step, resistance or transport of cytochalasins and related PKS-NRPS products. In Aspergillus clavatus (strain ATCC 1007 / CBS 513.65 / DSM 816 / NCTC 3887 / NRRL 1 / QM 1276 / 107), this protein is Cytochrome P450 monooxygenase ccsD.